Consider the following 95-residue polypeptide: Large ribosomal subunit protein bL27 (95 aa).

A propeptide spanning residues 1-6 is cleaved from the precursor; that stretch reads MKLQLF. The interval 1 to 25 is disordered; that stretch reads MKLQLFAHKKGVGSSRNGRDSESKR.

This sequence belongs to the bacterial ribosomal protein bL27 family. The N-terminus is cleaved by ribosomal processing cysteine protease Prp.

This is Large ribosomal subunit protein bL27 from Thermoanaerobacter pseudethanolicus (strain ATCC 33223 / 39E) (Clostridium thermohydrosulfuricum).